We begin with the raw amino-acid sequence, 379 residues long: MPTAIPADSVGLVSPQVAHFAEPLTLACGRTLADYQLIYETYGELNAARSNAVLICHALSGHHHAAGYHSEDDRKPGWWDSCIGPGKAIDTDRFFVVSLNNLGGCNGSTGPSSTNPATGKPYGADFPVVTVEDWVHSQARLADRLGINQWAAVVGGSLGGMQALQWAISYPERVRHCLAIASAPKLSAQNIAFNEVARQAILSDPEFHGGHFQEMGVIPKRGLMLARMVGHITYLSDDAMGTKFGRGLKSEKLNYDFNSVEFQVESYLRYQGEEFSGRFDANTYLLMTKALDYFDPAAANDDDLARTFEVAQADFCVMSFTTDWRFSPERSREIVDALLAARKNVCYLEIDAPQGHDAFLIPNPRYLQAFRGYMNRIAV.

One can recognise an AB hydrolase-1 domain in the interval 51–360; that stretch reads NAVLICHALS…DAPQGHDAFL (310 aa). The Nucleophile role is filled by Ser157. Substrate is bound at residue Arg227. Residues Asp323 and His356 contribute to the active site. Asp357 serves as a coordination point for substrate.

This sequence belongs to the AB hydrolase superfamily. MetX family. Homodimer.

The protein localises to the cytoplasm. The catalysed reaction is L-homoserine + succinyl-CoA = O-succinyl-L-homoserine + CoA. The protein operates within amino-acid biosynthesis; L-methionine biosynthesis via de novo pathway; O-succinyl-L-homoserine from L-homoserine: step 1/1. Transfers a succinyl group from succinyl-CoA to L-homoserine, forming succinyl-L-homoserine. The sequence is that of Homoserine O-succinyltransferase from Stutzerimonas stutzeri (strain A1501) (Pseudomonas stutzeri).